The sequence spans 1089 residues: Importin subunit beta-3 (1089 aa).

At Ser-2 the chain carries N-acetylserine. HEAT repeat units follow at residues 6-39 (EEVN…EEWI), 44-78 (IEYL…ALKA), 96-129 (KEVL…IAEC), 138-165 (PELL…ILTT), 175-207 (INSI…YFKQ), 216-252 (LGIL…LVEL), 260-295 (MFDQ…FSEN), 304-359 (QNYG…ALKL), 361-395 (GEYL…SSAA), 399-439 (ADVL…STDF), 441-481 (PFIQ…FSEF), 484-524 (KDIL…AEAA), 526-568 (NKFI…GFAV), 571-613 (EKFH…CRIL), 615-689 (DDFV…ATLL), 692-735 (QFAV…LLAA), 742-781 (ELVL…IKVM), 788-849 (EDQL…LKTT), 852-890 (HYLK…IQYG), 898-930 (KNAF…CAQY), 938-978 (VCIP…LYAY), 986-1017 (DTYT…QLIE), 1028-1063 (NISA…LLGF), and 1066-1089 (SSDA…KWFA). Position 830 is a phosphothreonine (Thr-830).

The protein belongs to the importin beta family. Importin beta-3 subfamily. As to quaternary structure, interacts with Ran (GSP1); interacts specifically with the GTP-bound form of Ran (GTP-Ran), protecting it from GTP hydrolysis and nucleotide exchange. Interacts with RPL25; this interaction is dissociated by binding to Ran-GTP. Interacts with YAP1; this interaction is dissociated by binding to Ran-GTP. Interacts with NOP1; via its rg-NLS. Interacts with SOF1; via its cNLS. Interacts with histones H3 and H4; via their NLS. Interacts with ABF1.

It localises to the cytoplasm. It is found in the nucleus. In terms of biological role, functions in nuclear protein import as nuclear transport receptor. Serves as receptor for classical and arginine/glycine-rich nuclear localization signals (cNLS and rg-NLS) in cargo substrates. Its predominant cargo substrate seems to be ribosomal proteins and ribosome biogenesis trans- and cis-acting factors. Required for nuclear transport of YAP1, NOP1 and SOF1. Mediates the nuclear import of histones H3 and H4. Mediates docking of the importin/substrate complex to the nuclear pore complex (NPC) through binding to repeat-containing nucleoporins. The complex is subsequently translocated through the pore by an energy requiring, Ran-dependent mechanism. At the nucleoplasmic side of the NPC, GTP-Ran binding leads to release of the cargo. The importin is re-exported from the nucleus to the cytoplasm where GTP hydrolysis releases Ran from importin. The directionality of nuclear import is thought to be conferred by an asymmetric distribution of the GTP- and GDP-bound forms of Ran between the cytoplasm and nucleus. Functionally, plays a role in protein secretion. The sequence is that of Importin subunit beta-3 from Saccharomyces cerevisiae (strain ATCC 204508 / S288c) (Baker's yeast).